The chain runs to 217 residues: MHNRKRKTVKKTVSFSDDQNLTNANLNNHRKGHIDDDTPPVYVRKSWTLIPFHLLALLYWFLKYTDFNLLALLYIMIPTQVIYLIFRFNKNTIYGKKRLRLNWLLVFITLGACLLLSIPCLAIIVLFGAPFVELLKESWLLALHCCFLTYPAVYDVFNCNFKVGYFKKYFISVVIGCWISCFVIPLDWDRDWQAWPVPLIVGAYLGSFIGFSIGGYI.

N-linked (GlcNAc...) asparagine glycosylation is present at Asn-20. Helical transmembrane passes span 41–61, 66–86, 107–127, 139–159, 169–189, and 197–217; these read VYVRKSWTLIPFHLLALLYWF, DFNLLALLYIMIPTQVIYLIF, FITLGACLLLSIPCLAIIVLF, WLLALHCCFLTYPAVYDVFNC, YFISVVIGCWISCFVIPLDWD, and VPLIVGAYLGSFIGFSIGGYI.

This sequence belongs to the PIGF family.

It is found in the endoplasmic reticulum membrane. Its pathway is glycolipid biosynthesis; glycosylphosphatidylinositol-anchor biosynthesis. In terms of biological role, acts in the GPI biosynthetic pathway between GlcNAc-PI synthesis and GPI transfer to protein. In Kluyveromyces lactis (strain ATCC 8585 / CBS 2359 / DSM 70799 / NBRC 1267 / NRRL Y-1140 / WM37) (Yeast), this protein is Glycosylphosphatidylinositol anchor biosynthesis protein 11 (GPI11).